The chain runs to 318 residues: N-succinylornithine carbamoyltransferase (318 aa).

Carbamoyl phosphate contacts are provided by residues 47-50, Trp-75, and Arg-110; that span reads SLRT. Glu-142 lines the N(2)-succinyl-L-ornithine pocket. 147–150 contacts carbamoyl phosphate; sequence HPLQ. N(2)-succinyl-L-ornithine is bound by residues His-176 and Lys-236. 274 to 275 provides a ligand contact to carbamoyl phosphate; that stretch reads CL. Residue Arg-278 participates in N(2)-succinyl-L-ornithine binding. Arg-302 serves as a coordination point for carbamoyl phosphate.

Belongs to the aspartate/ornithine carbamoyltransferase superfamily. SOTCase family. As to quaternary structure, homotrimer.

The enzyme catalyses N(2)-succinyl-L-ornithine + carbamoyl phosphate = N(2)-succinyl-L-citrulline + phosphate + H(+). It participates in amino-acid biosynthesis; L-arginine biosynthesis. Its function is as follows. Catalyzes the transfer of the carbamoyl group from carbamoyl phosphate to the delta-amino group of N(2)-succinyl-L-ornithine to produce N(2)-succinyl-L-citrulline. Is essential for arginine biosynthesis. Has no activity with either L-ornithine or L-aspartate as substrate. Also has no detectable AOTCase activity, being unable to convert N(2)-acetyl-L-ornithine to N(2)-acetyl-L-citrulline. In Bacteroides thetaiotaomicron (strain ATCC 29148 / DSM 2079 / JCM 5827 / CCUG 10774 / NCTC 10582 / VPI-5482 / E50), this protein is N-succinylornithine carbamoyltransferase.